The sequence spans 291 residues: ATP synthase gamma chain (291 aa).

It belongs to the ATPase gamma chain family. As to quaternary structure, F-type ATPases have 2 components, CF(1) - the catalytic core - and CF(0) - the membrane proton channel. CF(1) has five subunits: alpha(3), beta(3), gamma(1), delta(1), epsilon(1). CF(0) has three main subunits: a, b and c.

Its subcellular location is the cell membrane. In terms of biological role, produces ATP from ADP in the presence of a proton gradient across the membrane. The gamma chain is believed to be important in regulating ATPase activity and the flow of protons through the CF(0) complex. This chain is ATP synthase gamma chain, found in Streptococcus equi subsp. zooepidemicus (strain MGCS10565).